A 532-amino-acid chain; its full sequence is Apolipoprotein N-acyltransferase (532 aa).

6 helical membrane-spanning segments follow: residues 37-57 (IFVA…GAIA), 75-95 (WWFG…ALLV), 106-126 (LAVL…AMIA), 128-148 (LLWS…ALAE), 179-199 (VIGL…PALL), and 207-227 (TGIG…AWTL). One can recognise a CN hydrolase domain in the interval 245–494 (VQPSIAQAMK…VGVVDSYLPS (250 aa)). Glu-289 functions as the Proton acceptor in the catalytic mechanism. Lys-353 is a catalytic residue. Cys-406 functions as the Nucleophile in the catalytic mechanism. A helical transmembrane segment spans residues 505–525 (GWIQTVLILLTLLAASVGLIL).

Belongs to the CN hydrolase family. Apolipoprotein N-acyltransferase subfamily.

The protein localises to the cell inner membrane. The enzyme catalyses N-terminal S-1,2-diacyl-sn-glyceryl-L-cysteinyl-[lipoprotein] + a glycerophospholipid = N-acyl-S-1,2-diacyl-sn-glyceryl-L-cysteinyl-[lipoprotein] + a 2-acyl-sn-glycero-3-phospholipid + H(+). Its pathway is protein modification; lipoprotein biosynthesis (N-acyl transfer). Functionally, catalyzes the phospholipid dependent N-acylation of the N-terminal cysteine of apolipoprotein, the last step in lipoprotein maturation. The polypeptide is Apolipoprotein N-acyltransferase (Brucella suis biovar 1 (strain 1330)).